The following is a 72-amino-acid chain: Alpha-elapitoxin-Dpp2a (72 aa).

5 cysteine pairs are disulfide-bonded: Cys-3/Cys-21, Cys-14/Cys-42, Cys-27/Cys-31, Cys-46/Cys-57, and Cys-58/Cys-63.

Belongs to the three-finger toxin family. Long-chain subfamily. Type II alpha-neurotoxin sub-subfamily. As to expression, expressed by the venom gland.

Its subcellular location is the secreted. Functionally, binds with high affinity to muscular (alpha-1/CHRNA1) and neuronal (alpha-7/CHRNA7) nicotinic acetylcholine receptor (nAChR) and inhibits acetylcholine from binding to the receptor, thereby impairing neuromuscular and neuronal transmission. The protein is Alpha-elapitoxin-Dpp2a of Dendroaspis polylepis polylepis (Black mamba).